Here is a 197-residue protein sequence, read N- to C-terminus: Recombination protein RecR (197 aa).

The C4-type zinc-finger motif lies at 56 to 71 (CQRCHSFSDEAVCPLC). One can recognise a Toprim domain in the interval 79–174 (TLLCVVETAA…KVTRLAQGVP (96 aa)).

Belongs to the RecR family.

In terms of biological role, may play a role in DNA repair. It seems to be involved in an RecBC-independent recombinational process of DNA repair. It may act with RecF and RecO. The protein is Recombination protein RecR of Psychrobacter cryohalolentis (strain ATCC BAA-1226 / DSM 17306 / VKM B-2378 / K5).